We begin with the raw amino-acid sequence, 588 residues long: Protein POF1B (588 aa).

Coiled coils occupy residues 332–442 (STFS…VSET) and 502–530 (LHELTSLLEEKDSLIKRQSEELSKLRQEI).

Interacts with nonmuscle actin.

It is found in the cell junction. The protein resides in the tight junction. Plays a key role in the organization of epithelial monolayers by regulating the actin cytoskeleton. May be involved in ovary development. The protein is Protein POF1B (POF1B) of Pongo abelii (Sumatran orangutan).